Consider the following 319-residue polypeptide: Epoxyqueuosine reductase (319 aa).

The active-site Proton donor is the Asp128. The 30-residue stretch at 173 to 202 folds into the 4Fe-4S ferredoxin-type domain; it reads EANDPHPNYCGTCTRCLSACPTAALVEPAV. [4Fe-4S] cluster is bound by residues Cys182, Cys185, Cys188, Cys192, Cys208, Cys236, Cys239, and Cys243.

The protein belongs to the QueG family. In terms of assembly, monomer. Requires cob(II)alamin as cofactor. [4Fe-4S] cluster is required as a cofactor.

It is found in the cytoplasm. It carries out the reaction epoxyqueuosine(34) in tRNA + AH2 = queuosine(34) in tRNA + A + H2O. It functions in the pathway tRNA modification; tRNA-queuosine biosynthesis. In terms of biological role, catalyzes the conversion of epoxyqueuosine (oQ) to queuosine (Q), which is a hypermodified base found in the wobble positions of tRNA(Asp), tRNA(Asn), tRNA(His) and tRNA(Tyr). This Gloeobacter violaceus (strain ATCC 29082 / PCC 7421) protein is Epoxyqueuosine reductase.